Here is a 332-residue protein sequence, read N- to C-terminus: Adenosine deaminase (332 aa).

The Zn(2+) site is built by histidine 12 and histidine 14. Substrate-binding residues include histidine 14, aspartate 16, and glycine 170. Histidine 197 serves as a coordination point for Zn(2+). Glutamate 200 serves as the catalytic Proton donor. Residue aspartate 278 participates in Zn(2+) binding.

This sequence belongs to the metallo-dependent hydrolases superfamily. Adenosine and AMP deaminases family. Adenosine deaminase subfamily. It depends on Zn(2+) as a cofactor.

It carries out the reaction adenosine + H2O + H(+) = inosine + NH4(+). The catalysed reaction is 2'-deoxyadenosine + H2O + H(+) = 2'-deoxyinosine + NH4(+). Its function is as follows. Catalyzes the hydrolytic deamination of adenosine and 2-deoxyadenosine. In Clostridium perfringens (strain ATCC 13124 / DSM 756 / JCM 1290 / NCIMB 6125 / NCTC 8237 / Type A), this protein is Adenosine deaminase.